Here is a 293-residue protein sequence, read N- to C-terminus: tRNA pseudouridine synthase B (293 aa).

Asp-39 (nucleophile) is an active-site residue.

Belongs to the pseudouridine synthase TruB family. Type 1 subfamily.

It carries out the reaction uridine(55) in tRNA = pseudouridine(55) in tRNA. Its function is as follows. Responsible for synthesis of pseudouridine from uracil-55 in the psi GC loop of transfer RNAs. The chain is tRNA pseudouridine synthase B from Rickettsia bellii (strain OSU 85-389).